Here is a 712-residue protein sequence, read N- to C-terminus: Polyribonucleotide nucleotidyltransferase (712 aa).

Mg(2+) contacts are provided by Asp-488 and Asp-494. Positions 555 to 614 (PKIETINIPTDKIREVIGSGGKVIREIVATTGAKVDINDDGVVKVSASDGAKIKAAIDWI) constitute a KH domain. Residues 624 to 692 (GKIYDGKVVK…DRGKTKLSMK (69 aa)) form the S1 motif domain.

Belongs to the polyribonucleotide nucleotidyltransferase family. It depends on Mg(2+) as a cofactor.

The protein localises to the cytoplasm. It carries out the reaction RNA(n+1) + phosphate = RNA(n) + a ribonucleoside 5'-diphosphate. Its function is as follows. Involved in mRNA degradation. Catalyzes the phosphorolysis of single-stranded polyribonucleotides processively in the 3'- to 5'-direction. In Caulobacter vibrioides (strain NA1000 / CB15N) (Caulobacter crescentus), this protein is Polyribonucleotide nucleotidyltransferase.